A 95-amino-acid polypeptide reads, in one-letter code: Protein TusB (95 aa).

This sequence belongs to the DsrH/TusB family. As to quaternary structure, heterohexamer, formed by a dimer of trimers. The hexameric TusBCD complex contains 2 copies each of TusB, TusC and TusD. The TusBCD complex interacts with TusE.

The protein resides in the cytoplasm. Its function is as follows. Part of a sulfur-relay system required for 2-thiolation of 5-methylaminomethyl-2-thiouridine (mnm(5)s(2)U) at tRNA wobble positions. In Cronobacter sakazakii (strain ATCC BAA-894) (Enterobacter sakazakii), this protein is Protein TusB.